The chain runs to 187 residues: Superoxide dismutase [Cu-Zn] (187 aa).

The N-terminal stretch at 1–23 (MMKMKTLLALAISGICAAGVANA) is a signal peptide. Cu cation is bound by residues histidine 80, histidine 82, and histidine 105. Cysteines 87 and 183 form a disulfide. Residues histidine 105, histidine 114, histidine 123, and aspartate 126 each contribute to the Zn(2+) site. Cu cation is bound at residue histidine 161.

This sequence belongs to the Cu-Zn superoxide dismutase family. As to quaternary structure, homodimer. Requires Cu cation as cofactor. Zn(2+) is required as a cofactor.

The protein resides in the periplasm. It carries out the reaction 2 superoxide + 2 H(+) = H2O2 + O2. Functionally, destroys radicals which are normally produced within the cells and which are toxic to biological systems. Its function is as follows. May confer survival advantage by accelerating dismutation of superoxide of environmental origin to hydrogen peroxide, disruptive to the normal mucociliary clearance process in the host. This Haemophilus parainfluenzae protein is Superoxide dismutase [Cu-Zn] (sodC).